The chain runs to 308 residues: Phosphoribosylaminoimidazole-succinocarboxamide synthase (308 aa).

Belongs to the SAICAR synthetase family.

It carries out the reaction 5-amino-1-(5-phospho-D-ribosyl)imidazole-4-carboxylate + L-aspartate + ATP = (2S)-2-[5-amino-1-(5-phospho-beta-D-ribosyl)imidazole-4-carboxamido]succinate + ADP + phosphate + 2 H(+). It functions in the pathway purine metabolism; IMP biosynthesis via de novo pathway; 5-amino-1-(5-phospho-D-ribosyl)imidazole-4-carboxamide from 5-amino-1-(5-phospho-D-ribosyl)imidazole-4-carboxylate: step 1/2. The protein is Phosphoribosylaminoimidazole-succinocarboxamide synthase of Stenotrophomonas maltophilia (strain R551-3).